A 396-amino-acid chain; its full sequence is Maltose/maltodextrin-binding periplasmic protein (396 aa).

The N-terminal stretch at 1-26 (MKIKTGARILALSALTTMMFSASALA) is a signal peptide.

It belongs to the bacterial solute-binding protein 1 family. The complex is composed of two ATP-binding proteins (MalK), two transmembrane proteins (MalG and MalF) and a solute-binding protein (MalE).

It is found in the periplasm. Its function is as follows. Part of the ABC transporter complex MalEFGK involved in maltose/maltodextrin import. Binds maltose and higher maltodextrins. This Klebsiella aerogenes (Enterobacter aerogenes) protein is Maltose/maltodextrin-binding periplasmic protein (malE).